A 423-amino-acid polypeptide reads, in one-letter code: Protein disulfide isomerase-like 5-2 (423 aa).

Positions 1 to 35 (MAATTTRPLPLLLLLLLPPLLLLLLSFHAAAAAAA) are cleaved as a signal peptide. The Thioredoxin domain maps to 36–149 (EEFPRDGRVI…LVRNLNKFVA (114 aa)). Catalysis depends on nucleophile residues C71 and C74. A disulfide bond links C71 and C74. N-linked (GlcNAc...) asparagine glycosylation occurs at N181. Residues 386–406 (LVSLNSLYILICVFALLGVMI) traverse the membrane as a helical segment.

This sequence belongs to the protein disulfide isomerase family.

Its subcellular location is the membrane. In terms of biological role, acts as a protein-folding catalyst that interacts with nascent polypeptides to catalyze the formation, isomerization, and reduction or oxidation of disulfide bonds. May play a role in storage protein biogenesis. This is Protein disulfide isomerase-like 5-2 (PDIL5-2) from Oryza sativa subsp. japonica (Rice).